The sequence spans 245 residues: Superoxide dismutase 1 copper chaperone (245 aa).

The 64-residue stretch at 8–71 folds into the HMA domain; the sequence is DFEATYAVEM…ALKNCGRDGI (64 aa). Residues Cys-19 and Cys-22 each contribute to the Cu cation site. A disulfide bond links Cys-29 and Cys-66. Residues Cys-224 and Cys-226 each coordinate Cu cation.

Belongs to the CCS1 family. It depends on Cu(2+) as a cofactor.

Its subcellular location is the cytoplasm. Its function is as follows. Copper chaperone for superoxide dismutase 1 (SOD1). Binds copper ions and delivers them specifically to SOD1. The sequence is that of Superoxide dismutase 1 copper chaperone (CCS1) from Kluyveromyces lactis (strain ATCC 8585 / CBS 2359 / DSM 70799 / NBRC 1267 / NRRL Y-1140 / WM37) (Yeast).